A 425-amino-acid polypeptide reads, in one-letter code: Histidine--tRNA ligase (425 aa).

The protein belongs to the class-II aminoacyl-tRNA synthetase family. In terms of assembly, homodimer.

It localises to the cytoplasm. It carries out the reaction tRNA(His) + L-histidine + ATP = L-histidyl-tRNA(His) + AMP + diphosphate + H(+). This is Histidine--tRNA ligase from Streptomyces coelicolor (strain ATCC BAA-471 / A3(2) / M145).